The chain runs to 157 residues: UPF0212 protein rrnAC1165 (157 aa).

Residues 105-157 (VLEIEEIPEESDETTEDESSSAESEADADDPPSDQSADESDDVLPEFEELIDE) are disordered. The span at 106-157 (LEIEEIPEESDETTEDESSSAESEADADDPPSDQSADESDDVLPEFEELIDE) shows a compositional bias: acidic residues.

This sequence belongs to the UPF0212 family.

The sequence is that of UPF0212 protein rrnAC1165 from Haloarcula marismortui (strain ATCC 43049 / DSM 3752 / JCM 8966 / VKM B-1809) (Halobacterium marismortui).